A 475-amino-acid chain; its full sequence is tRNA-2-methylthio-N(6)-dimethylallyladenosine synthase (475 aa).

Residues 1–10 (MQETTVKRDG) are compositionally biased toward basic and acidic residues. The segment at 1–22 (MQETTVKRDGASPSDAGTPATT) is disordered. The region spanning 27 to 144 (GKLYIRTFGC…LPDLIKRRRA (118 aa)) is the MTTase N-terminal domain. Residues cysteine 36, cysteine 73, cysteine 107, cysteine 181, cysteine 185, and cysteine 188 each contribute to the [4Fe-4S] cluster site. The 234-residue stretch at 167–400 (RVDGATAFVS…QALINQQAAA (234 aa)) folds into the Radical SAM core domain. In terms of domain architecture, TRAM spans 403-466 (QGMIGTRQRV…TNSLRGRVAG (64 aa)).

Belongs to the methylthiotransferase family. MiaB subfamily. In terms of assembly, monomer. [4Fe-4S] cluster is required as a cofactor.

It localises to the cytoplasm. It carries out the reaction N(6)-dimethylallyladenosine(37) in tRNA + (sulfur carrier)-SH + AH2 + 2 S-adenosyl-L-methionine = 2-methylsulfanyl-N(6)-dimethylallyladenosine(37) in tRNA + (sulfur carrier)-H + 5'-deoxyadenosine + L-methionine + A + S-adenosyl-L-homocysteine + 2 H(+). Functionally, catalyzes the methylthiolation of N6-(dimethylallyl)adenosine (i(6)A), leading to the formation of 2-methylthio-N6-(dimethylallyl)adenosine (ms(2)i(6)A) at position 37 in tRNAs that read codons beginning with uridine. The chain is tRNA-2-methylthio-N(6)-dimethylallyladenosine synthase from Bordetella bronchiseptica (strain ATCC BAA-588 / NCTC 13252 / RB50) (Alcaligenes bronchisepticus).